We begin with the raw amino-acid sequence, 619 residues long: Putative zinc transporter At3g08650 (619 aa).

15 consecutive transmembrane segments (helical) span residues 25–45 (MMHS…VVFI), 102–122 (VALF…PFFF), 129–149 (WAGI…FDLV), 155–175 (HGSG…IWLC), 198–218 (VVLV…GVGV), 230–250 (LLVT…VSMV), 261–281 (AMLW…PAFL), 289–309 (FLPF…IAEV), 354–374 (GFFV…FLVA), 383–403 (HALL…WRPL), 405–425 (LLLS…IGAG), 465–485 (LLAC…LGVA), 528–548 (AAAL…LAGI), 552–572 (GLDH…WQVI), and 585–605 (VGMV…RLVC).

Belongs to the ZIP transporter (TC 2.A.5) family. ZupT subfamily.

The protein localises to the membrane. Functionally, may transport zinc. This chain is Putative zinc transporter At3g08650, found in Arabidopsis thaliana (Mouse-ear cress).